The chain runs to 805 residues: DNA gyrase subunit B (805 aa).

The region spanning 431-546 (CEMYIVEGDS…NECVYIAQPP (116 aa)) is the Toprim domain. Mg(2+)-binding residues include glutamate 437, aspartate 511, and aspartate 513.

Belongs to the type II topoisomerase GyrB family. As to quaternary structure, heterotetramer, composed of two GyrA and two GyrB chains. In the heterotetramer, GyrA contains the active site tyrosine that forms a transient covalent intermediate with DNA, while GyrB binds cofactors and catalyzes ATP hydrolysis. It depends on Mg(2+) as a cofactor. Mn(2+) is required as a cofactor. The cofactor is Ca(2+).

It is found in the cytoplasm. It catalyses the reaction ATP-dependent breakage, passage and rejoining of double-stranded DNA.. A type II topoisomerase that negatively supercoils closed circular double-stranded (ds) DNA in an ATP-dependent manner to modulate DNA topology and maintain chromosomes in an underwound state. Negative supercoiling favors strand separation, and DNA replication, transcription, recombination and repair, all of which involve strand separation. Also able to catalyze the interconversion of other topological isomers of dsDNA rings, including catenanes and knotted rings. Type II topoisomerases break and join 2 DNA strands simultaneously in an ATP-dependent manner. The sequence is that of DNA gyrase subunit B from Chlamydia pneumoniae (Chlamydophila pneumoniae).